A 410-amino-acid polypeptide reads, in one-letter code: MELPSGPGPERLFDSHRLPGDCFLLLVLLLYAPVGFCLLVLRLFLGIHVFLVSCALPDSVLRRFVVRTMCAVLGLVARQEDSGLRDHSVRVLISNHVTPFDHNIVNLLTTCSTPLLNSPPSFVCWSRGFMEMNGRGELVESLKRFCASTRLPPTPLLLFPEEEATNGREGLLRFSSWPFSIQDVVQPLTLQVQRPLVSVTVSDASWVSELLWSLFVPFTVYQVRWLRPVHRQLGEANEEFALRVQQLVAKELGQTGTRLTPADKAEHMKRQRHPRLRPQSAQSSFPPSPGPSPDVQLATLAQRVKEVLPHVPLGVIQRDLAKTGCVDLTITNLLEGAVAFMPEDITKGTQSLPTASASKFPSSGPVTPQPTALTFAKSSWARQESLQERKQALYEYARRRFTERRAQEAD.

N-acetylmethionine is present on Met-1. The Cytoplasmic segment spans residues 1-20 (MELPSGPGPERLFDSHRLPG). The residue at position 5 (Ser-5) is a Phosphoserine. The stretch at 21 to 41 (DCFLLLVLLLYAPVGFCLLVL) is an intramembrane region. At 42–410 (RLFLGIHVFL…FTERRAQEAD (369 aa)) the chain is on the cytoplasmic side. The interval 255–295 (TGTRLTPADKAEHMKRQRHPRLRPQSAQSSFPPSPGPSPDV) is disordered. Residues Ser-288 and Ser-292 each carry the phosphoserine modification. A CUE domain is found at 296–338 (QLATLAQRVKEVLPHVPLGVIQRDLAKTGCVDLTITNLLEGAV). Positions 350-369 (QSLPTASASKFPSSGPVTPQ) are disordered. The residue at position 363 (Ser-363) is a Phosphoserine. A Phosphothreonine modification is found at Thr-367.

This sequence belongs to the AUP1 family. As to quaternary structure, identified in a complex that contains SEL1L, OS9, FAF2/UBXD8, UBE2J1/UBC6E and AUP1. Interacts with the cytoplasmic tail of ITGA2B, ITGA1, ITGA2, ITGA5, ITGAV and ITGAM. Interacts (via C-terminus) with ubiquitin-conjugating enzyme UBE2G2; the interaction recruits UBE2G2 to lipid droplets. Interacts with ubiquitin ligases AMFR/gp78 and RNF139/TRC8; this promotes interaction of UBE2G2 with AMFR and RNF139. Interacts with apolipoprotein APOB. In terms of assembly, (Microbial infection) Interacts with Dengue virus NS4A; the interaction occurs in the presence of Dengue virus NS4B and induces lipophagy which facilitates production of virus progeny. In terms of processing, monoubiquitinated and diubiquitinated. (Microbial infection) Not ubiquitinated following Dengue virus infection. As to expression, detected in blood platelets and leukocytes (at protein level). Ubiquitous. Highly expressed in placenta, liver, kidney, skeletal muscle, heart and brain.

The protein localises to the endoplasmic reticulum membrane. Its subcellular location is the lipid droplet. The protein resides in the cytoplasmic vesicle. It is found in the autophagosome. Functionally, plays a role in the translocation of terminally misfolded proteins from the endoplasmic reticulum lumen to the cytoplasm and their degradation by the proteasome. Plays a role in lipid droplet formation. Induces lipid droplet clustering. Recruits ubiquitin-conjugating enzyme UBE2G2 to lipid droplets which facilitates its interaction with ubiquitin ligases AMFR/gp78 and RNF139/TRC8, leading to sterol-induced ubiquitination of HMGCR and its subsequent proteasomal degradation. Also required for the degradation of INSIG1, SREBF1 and SREBF2. Plays a role in regulating assembly and secretion of very low density lipoprotein particles and stability of apolipoprotein APOB. (Microbial infection) Following Dengue virus infection, required for induction of lipophagy which facilitates production of virus progeny particles. This is Lipid droplet-regulating VLDL assembly factor AUP1 from Homo sapiens (Human).